Reading from the N-terminus, the 293-residue chain is ATP synthase gamma chain (293 aa).

It belongs to the ATPase gamma chain family. F-type ATPases have 2 components, CF(1) - the catalytic core - and CF(0) - the membrane proton channel. CF(1) has five subunits: alpha(3), beta(3), gamma(1), delta(1), epsilon(1). CF(0) has three main subunits: a, b and c.

The protein localises to the cell inner membrane. Functionally, produces ATP from ADP in the presence of a proton gradient across the membrane. The gamma chain is believed to be important in regulating ATPase activity and the flow of protons through the CF(0) complex. The chain is ATP synthase gamma chain from Psychrobacter sp. (strain PRwf-1).